We begin with the raw amino-acid sequence, 284 residues long: Large ribosomal subunit protein uL2 (284 aa).

Disordered regions lie at residues 28–50 and 232–284; these read ELEGSSSKRSVRPNKKLSFFKKS and RGTA…DRRK. Positions 36 to 46 are enriched in basic residues; the sequence is RSVRPNKKLSF. Basic and acidic residues predominate over residues 240–250; sequence DHPHGGGEGRH. Positions 264 to 284 are enriched in basic residues; the sequence is KGLKTRDKRKSNKWIVKDRRK.

The protein belongs to the universal ribosomal protein uL2 family. As to quaternary structure, part of the 50S ribosomal subunit. Forms a bridge to the 30S subunit in the 70S ribosome.

Its function is as follows. One of the primary rRNA binding proteins. Required for association of the 30S and 50S subunits to form the 70S ribosome, for tRNA binding and peptide bond formation. It has been suggested to have peptidyltransferase activity; this is somewhat controversial. Makes several contacts with the 16S rRNA in the 70S ribosome. The sequence is that of Large ribosomal subunit protein uL2 from Chlamydia muridarum (strain MoPn / Nigg).